A 751-amino-acid polypeptide reads, in one-letter code: Phosphoribosylformylglycinamidine synthase subunit PurL (751 aa).

Residue histidine 54 is part of the active site. Tyrosine 57 and lysine 106 together coordinate ATP. Glutamate 108 serves as a coordination point for Mg(2+). Residues 109-112 and arginine 131 contribute to the substrate site; that span reads SHNH. Histidine 110 serves as the catalytic Proton acceptor. Position 132 (aspartate 132) interacts with Mg(2+). Residue glutamine 256 participates in substrate binding. Mg(2+) is bound at residue aspartate 284. Substrate is bound at residue 328–330; it reads ESQ. Residues aspartate 516 and glycine 553 each contribute to the ATP site. Residue asparagine 554 coordinates Mg(2+). Serine 556 provides a ligand contact to substrate.

It belongs to the FGAMS family. As to quaternary structure, monomer. Part of the FGAM synthase complex composed of 1 PurL, 1 PurQ and 2 PurS subunits.

The protein localises to the cytoplasm. It catalyses the reaction N(2)-formyl-N(1)-(5-phospho-beta-D-ribosyl)glycinamide + L-glutamine + ATP + H2O = 2-formamido-N(1)-(5-O-phospho-beta-D-ribosyl)acetamidine + L-glutamate + ADP + phosphate + H(+). The protein operates within purine metabolism; IMP biosynthesis via de novo pathway; 5-amino-1-(5-phospho-D-ribosyl)imidazole from N(2)-formyl-N(1)-(5-phospho-D-ribosyl)glycinamide: step 1/2. Part of the phosphoribosylformylglycinamidine synthase complex involved in the purines biosynthetic pathway. Catalyzes the ATP-dependent conversion of formylglycinamide ribonucleotide (FGAR) and glutamine to yield formylglycinamidine ribonucleotide (FGAM) and glutamate. The FGAM synthase complex is composed of three subunits. PurQ produces an ammonia molecule by converting glutamine to glutamate. PurL transfers the ammonia molecule to FGAR to form FGAM in an ATP-dependent manner. PurS interacts with PurQ and PurL and is thought to assist in the transfer of the ammonia molecule from PurQ to PurL. This is Phosphoribosylformylglycinamidine synthase subunit PurL from Nocardioides sp. (strain ATCC BAA-499 / JS614).